Consider the following 981-residue polypeptide: Polyhomeotic-like protein 3 (981 aa).

Residues 1–28 (MDSEPSSGTSVSTTASSTTTTTITTSSS) show a composition bias toward low complexity. Disordered stretches follow at residues 1-33 (MDSEPSSGTSVSTTASSTTTTTITTSSSRMQQP), 102-127 (LSSGRPSTSPTGSVTQQSSMSQTSIL), 224-280 (LSSS…TAVT), and 307-407 (QIPL…SQSP). Positions 224–255 (LSSSQNGSPKSAGQTQSLTICHNKTTVTSSKI) are enriched in polar residues. Phosphoserine occurs at positions 231, 261, 269, and 312. Basic and acidic residues predominate over residues 256–266 (SQRDPSPESKK). The span at 321 to 340 (QLLLQQQQQQIQPITLQSPS) shows a compositional bias: low complexity. Over residues 360–373 (APSNAQPQHCSPVQ) the composition is skewed to polar residues. A compositionally biased stretch (low complexity) spans 381 to 395 (VSPNQAQSAQQSVVV). A phosphothreonine mark is found at T607 and T612. S614 carries the post-translational modification Phosphoserine. Residues 650–690 (KSPSDPTHASAPAPPLLIPAASTRSSSTSLASSTPSLENKP) are disordered. The span at 667–686 (IPAASTRSSSTSLASSTPSL) shows a compositional bias: low complexity. Residues K689 and K730 each participate in a glycyl lysine isopeptide (Lys-Gly) (interchain with G-Cter in SUMO2) cross-link. The HD1 signature appears at 689-718 (KPPQAIVKPQILTHVIEGFVIQEGLEPFPV). Phosphoserine occurs at positions 759 and 760. The segment at 774 to 808 (EEMDSELLKCEFCGKMGYPNEFLRSKRFCTMSCAK) adopts an FCS-type zinc-finger fold. Positions 783, 786, 802, and 806 each coordinate Zn(2+). K808 is covalently cross-linked (Glycyl lysine isopeptide (Lys-Gly) (interchain with G-Cter in SUMO2)). 2 disordered regions span residues 825–844 (RKPDNQSLGHRGRRPSGPEG) and 863–888 (EDVASHEDPVPSAMTTRLRRQSERER). The 65-residue stretch at 917–981 (WTVDDVWAFI…CARINSLKDS (65 aa)) folds into the SAM domain.

In terms of assembly, component of a PRC1-like complex. In terms of tissue distribution, ubiquitous expression.

It is found in the nucleus. In terms of biological role, component of a Polycomb group (PcG) multiprotein PRC1-like complex, a complex class required to maintain the transcriptionally repressive state of many genes, including Hox genes, throughout development. PcG PRC1 complex acts via chromatin remodeling and modification of histones; it mediates monoubiquitination of histone H2A 'Lys-119', rendering chromatin heritably changed in its expressibility. In Mus musculus (Mouse), this protein is Polyhomeotic-like protein 3 (Phc3).